A 109-amino-acid chain; its full sequence is Cell division protein ZapA (109 aa).

Positions 21-97 (PEQQEALNQA…QTIEQALVEQ (77 aa)) form a coiled coil.

It belongs to the ZapA family. Type 1 subfamily. Homodimer. Interacts with FtsZ.

The protein resides in the cytoplasm. Activator of cell division through the inhibition of FtsZ GTPase activity, therefore promoting FtsZ assembly into bundles of protofilaments necessary for the formation of the division Z ring. It is recruited early at mid-cell but it is not essential for cell division. This is Cell division protein ZapA from Sodalis glossinidius (strain morsitans).